The primary structure comprises 317 residues: Lipoyl synthase (317 aa).

Residues Cys-56, Cys-61, Cys-67, Cys-82, Cys-86, Cys-89, and Ser-298 each coordinate [4Fe-4S] cluster. The Radical SAM core domain maps to 68–287 (WEDREATFLI…KEEAEQIGFS (220 aa)).

It belongs to the radical SAM superfamily. Lipoyl synthase family. The cofactor is [4Fe-4S] cluster.

The protein resides in the cytoplasm. The enzyme catalyses [[Fe-S] cluster scaffold protein carrying a second [4Fe-4S](2+) cluster] + N(6)-octanoyl-L-lysyl-[protein] + 2 oxidized [2Fe-2S]-[ferredoxin] + 2 S-adenosyl-L-methionine + 4 H(+) = [[Fe-S] cluster scaffold protein] + N(6)-[(R)-dihydrolipoyl]-L-lysyl-[protein] + 4 Fe(3+) + 2 hydrogen sulfide + 2 5'-deoxyadenosine + 2 L-methionine + 2 reduced [2Fe-2S]-[ferredoxin]. The protein operates within protein modification; protein lipoylation via endogenous pathway; protein N(6)-(lipoyl)lysine from octanoyl-[acyl-carrier-protein]: step 2/2. Its function is as follows. Catalyzes the radical-mediated insertion of two sulfur atoms into the C-6 and C-8 positions of the octanoyl moiety bound to the lipoyl domains of lipoate-dependent enzymes, thereby converting the octanoylated domains into lipoylated derivatives. This is Lipoyl synthase from Streptomyces coelicolor (strain ATCC BAA-471 / A3(2) / M145).